The sequence spans 184 residues: UPF0149 protein PP_5201 (184 aa).

It belongs to the UPF0149 family.

The chain is UPF0149 protein PP_5201 from Pseudomonas putida (strain ATCC 47054 / DSM 6125 / CFBP 8728 / NCIMB 11950 / KT2440).